A 348-amino-acid chain; its full sequence is 4-hydroxy-3-methylbut-2-en-1-yl diphosphate synthase (flavodoxin) (348 aa).

Residues cysteine 263, cysteine 266, cysteine 298, and glutamate 305 each contribute to the [4Fe-4S] cluster site.

It belongs to the IspG family. Requires [4Fe-4S] cluster as cofactor.

The catalysed reaction is (2E)-4-hydroxy-3-methylbut-2-enyl diphosphate + oxidized [flavodoxin] + H2O + 2 H(+) = 2-C-methyl-D-erythritol 2,4-cyclic diphosphate + reduced [flavodoxin]. It participates in isoprenoid biosynthesis; isopentenyl diphosphate biosynthesis via DXP pathway; isopentenyl diphosphate from 1-deoxy-D-xylulose 5-phosphate: step 5/6. Its function is as follows. Converts 2C-methyl-D-erythritol 2,4-cyclodiphosphate (ME-2,4cPP) into 1-hydroxy-2-methyl-2-(E)-butenyl 4-diphosphate. This is 4-hydroxy-3-methylbut-2-en-1-yl diphosphate synthase (flavodoxin) from Dehalococcoides mccartyi (strain ATCC BAA-2100 / JCM 16839 / KCTC 5957 / BAV1).